Here is a 60-residue protein sequence, read N- to C-terminus: Large ribosomal subunit protein bL32 (60 aa).

Positions 1 to 28 (MAVQQNKKSRSARDMRRSHDALEASTLS) are disordered. Positions 11-22 (SARDMRRSHDAL) are enriched in basic and acidic residues.

The protein belongs to the bacterial ribosomal protein bL32 family.

This is Large ribosomal subunit protein bL32 from Pseudomonas savastanoi pv. phaseolicola (strain 1448A / Race 6) (Pseudomonas syringae pv. phaseolicola (strain 1448A / Race 6)).